Reading from the N-terminus, the 437-residue chain is MGTKELHIVMYPWLAFGHFIPYLHLSNKLAQKGHKITFLLPHRAKLQLDSQNLYPSLITLVPITVPQVDTLPLGAESTADIPLSQHGDLSIAMDRTRPEIESILSKLDPKPDLIFFDMAQWVPVIASKLGIKSVSYNIVCAISLDLVRDWYKKDDGSNVPSWTLKHDKSSHFGENISILERALIALGTPDAIGIRSCREIEGEYCDSIAERFKKPVLLSGTTLPEPSDDPLDPKWVKWLGKFEEGSVIFCCLGSQHVLDKPQLQELALGLEMTGLPFFLAIKPPLGYATLDEVLPEGFSERVRDRGVAHGGWVQQPQMLAHPSVGCFLCHCGSSSMWEALVSDTQLVLFPQIPDQALNAVLMADKLKVGVKVEREDDGGVSKEVWSRAIKSVMDKESEIAAEVKKNHTKWRDMLINEEFVNGYIDSFIKDLQDLVEK.

The active-site Proton acceptor is His-18. The active-site Charge relay is the Asp-117. Positions 254, 312, 313, 330, 335, and 338 each coordinate UDP.

Belongs to the UDP-glycosyltransferase family. In terms of tissue distribution, mainly expressed in flowers, flower buds and young leaves, and, to a lesser extent, in old leaves, stems and roots.

It participates in secondary metabolite biosynthesis; terpenoid biosynthesis. In terms of biological role, component of the oleanane-type triterpene saponins (e.g. saponarioside A and saponarioside B) biosynthetic pathway, leading to the production of natural products with detergent properties used as traditional sources of soap. A glycosyltransferase that mediates the conversion of QA-triFR to QA-triFRX via the elongation of the C-28 sugar chain with a D-xylose. This chain is UDP-glucosyl transferase 79L3, found in Saponaria officinalis (Common soapwort).